The sequence spans 159 residues: Ribosomal RNA large subunit methyltransferase H (159 aa).

The S-adenosyl-L-methionine site is built by L76 and G108.

Belongs to the RNA methyltransferase RlmH family. In terms of assembly, homodimer.

Its subcellular location is the cytoplasm. The catalysed reaction is pseudouridine(1915) in 23S rRNA + S-adenosyl-L-methionine = N(3)-methylpseudouridine(1915) in 23S rRNA + S-adenosyl-L-homocysteine + H(+). In terms of biological role, specifically methylates the pseudouridine at position 1915 (m3Psi1915) in 23S rRNA. This chain is Ribosomal RNA large subunit methyltransferase H, found in Limosilactobacillus fermentum (strain NBRC 3956 / LMG 18251) (Lactobacillus fermentum).